Here is a 267-residue protein sequence, read N- to C-terminus: Energy-coupling factor transporter transmembrane protein EcfT (267 aa).

The next 5 membrane-spanning stretches (helical) occupy residues 26 to 46 (IILT…WGYL), 73 to 93 (ILFI…GTVI), 116 to 136 (LFLL…IALT), 151 to 171 (VPVH…PTLL), and 247 to 267 (LVTG…YVFF).

Belongs to the energy-coupling factor EcfT family. Forms a stable energy-coupling factor (ECF) transporter complex composed of 2 membrane-embedded substrate-binding proteins (S component), 2 ATP-binding proteins (A component) and 2 transmembrane proteins (T component). May be able to interact with more than 1 S component at a time.

It localises to the cell membrane. Transmembrane (T) component of an energy-coupling factor (ECF) ABC-transporter complex. Unlike classic ABC transporters this ECF transporter provides the energy necessary to transport a number of different substrates. The protein is Energy-coupling factor transporter transmembrane protein EcfT of Ruminiclostridium cellulolyticum (strain ATCC 35319 / DSM 5812 / JCM 6584 / H10) (Clostridium cellulolyticum).